A 376-amino-acid chain; its full sequence is Flagellin B (376 aa).

A coiled-coil region spans residues 103 to 130 (SNSSSERQAIQEEVSALNDELNRIAETT).

The protein belongs to the bacterial flagellin family. As to quaternary structure, heteromer of multiple flagellin subunits including FlaA, FlaB, FlaC, FlaD and possibly FlaE.

The protein localises to the secreted. It is found in the bacterial flagellum. In terms of biological role, flagellin is the subunit protein which polymerizes to form the filaments of bacterial flagella. FlaB is not essential for flagellar synthesis and motility. This is Flagellin B (flaB) from Vibrio anguillarum (Listonella anguillarum).